A 356-amino-acid polypeptide reads, in one-letter code: Alanine racemase, catabolic (356 aa).

K35 serves as the catalytic Proton acceptor; specific for D-alanine. Position 35 is an N6-(pyridoxal phosphate)lysine (K35). R130 contributes to the substrate binding site. The active-site Proton acceptor; specific for L-alanine is the Y253. M301 serves as a coordination point for substrate.

Belongs to the alanine racemase family. It depends on pyridoxal 5'-phosphate as a cofactor.

The enzyme catalyses L-alanine = D-alanine. Functionally, isomerizes L-alanine to D-alanine which is then oxidized to pyruvate by DadA. This is Alanine racemase, catabolic (dadX) from Escherichia coli O6:H1 (strain CFT073 / ATCC 700928 / UPEC).